The following is a 485-amino-acid chain: Noelin (485 aa).

Positions 1–24 (MSVPLLKIGVVLSTMAMITNWMSQ) are cleaved as a signal peptide. N-linked (GlcNAc...) asparagine glycosylation is found at Asn-33, Asn-103, Asn-187, Asn-288, Asn-307, Asn-394, Asn-431, and Asn-473. Positions 87–225 (RDARTKQLRQ…ERLRACMQKL (139 aa)) form a coiled coil. The Olfactomedin-like domain maps to 226–478 (ACGKLTGISD…QTLYNVTLFH (253 aa)). Cys-227 and Cys-409 are oxidised to a cystine.

As to quaternary structure, homotetramer; disulfide-linked. Dimer of dimers, giving rise to a V-shaped homotretramer. Isoform 1 and isoform 3 interact with RTN4R. Identified in a complex with RTN4R and LINGO1. Peripherally associated with AMPAR complex. AMPAR complex consists of an inner core made of 4 pore-forming GluA/GRIA proteins (GRIA1, GRIA2, GRIA3 and GRIA4) and 4 major auxiliary subunits arranged in a twofold symmetry. One of the two pairs of distinct binding sites is occupied either by CNIH2, CNIH3 or CACNG2, CACNG3. The other harbors CACNG2, CACNG3, CACNG4, CACNG8 or GSG1L. This inner core of AMPAR complex is complemented by outer core constituents binding directly to the GluA/GRIA proteins at sites distinct from the interaction sites of the inner core constituents. Outer core constituents include at least PRRT1, PRRT2, CKAMP44/SHISA9, FRRS1L and NRN1. The proteins of the inner and outer core serve as a platform for other, more peripherally associated AMPAR constituents, including OLFM1. Alone or in combination, these auxiliary subunits control the gating and pharmacology of the AMPAR complex and profoundly impact their biogenesis and protein processing. Interacts with OLFM2. In terms of processing, in isoform 3 and isoform 4, the signal peptide is predicted to end in position 17. In terms of tissue distribution, expressed in the brain (at protein level). Expressed in the brain, predominantly in the cortex and hippocampus. In the pituitary only the two A-type and in the adrenal glands only the two B-type forms were detected.

The protein localises to the secreted. Its subcellular location is the synapse. It localises to the endoplasmic reticulum. The protein resides in the cell projection. It is found in the axon. The protein localises to the perikaryon. Its function is as follows. Contributes to the regulation of axonal growth in the embryonic and adult central nervous system by inhibiting interactions between RTN4R and LINGO1. Inhibits RTN4R-mediated axon growth cone collapse. May play an important role in regulating the production of neural crest cells by the neural tube. May be required for normal responses to olfactory stimuli. This Rattus norvegicus (Rat) protein is Noelin (Olfm1).